The following is a 205-amino-acid chain: uncharacterized protein (205 aa).

Positions 11–71 constitute an HTH tetR-type domain; sequence KTRRALVDAA…EMVDEAGLML (61 aa).

This is an uncharacterized protein from Haemophilus influenzae (strain ATCC 51907 / DSM 11121 / KW20 / Rd).